Here is a 317-residue protein sequence, read N- to C-terminus: Pseudouridine-5'-phosphate glycosidase (317 aa).

Residue Glu27 is the Proton donor of the active site. Substrate is bound by residues Lys89 and Val109. Residue Asp141 participates in Mn(2+) binding. 143–145 (SAD) provides a ligand contact to substrate. The Nucleophile role is filled by Lys162.

The protein belongs to the pseudouridine-5'-phosphate glycosidase family. In terms of assembly, homotrimer. Mn(2+) is required as a cofactor.

The catalysed reaction is D-ribose 5-phosphate + uracil = psi-UMP + H2O. Its function is as follows. Catalyzes the reversible cleavage of pseudouridine 5'-phosphate (PsiMP) to ribose 5-phosphate and uracil. Functions biologically in the cleavage direction, as part of a pseudouridine degradation pathway. The chain is Pseudouridine-5'-phosphate glycosidase from Sorangium cellulosum (strain So ce56) (Polyangium cellulosum (strain So ce56)).